Consider the following 366-residue polypeptide: 5-amino-6-(D-ribitylamino)uracil--L-tyrosine 4-hydroxyphenyl transferase (366 aa).

Residues 51–290 (RCGNAITWVK…MIAISRLFLD (240 aa)) form the Radical SAM core domain. [4Fe-4S] cluster is bound by residues C70, C74, and C77.

Belongs to the radical SAM superfamily. CofH family. In terms of assembly, consists of two subunits, CofG and CofH. [4Fe-4S] cluster is required as a cofactor.

It carries out the reaction 5-amino-6-(D-ribitylamino)uracil + L-tyrosine + S-adenosyl-L-methionine = 5-amino-5-(4-hydroxybenzyl)-6-(D-ribitylimino)-5,6-dihydrouracil + 2-iminoacetate + 5'-deoxyadenosine + L-methionine + H(+). Its pathway is cofactor biosynthesis; coenzyme F0 biosynthesis. Catalyzes the radical-mediated synthesis of 5-amino-5-(4-hydroxybenzyl)-6-(D-ribitylimino)-5,6-dihydrouracil from 5-amino-6-(D-ribitylamino)uracil and L-tyrosine. In Methanospirillum hungatei JF-1 (strain ATCC 27890 / DSM 864 / NBRC 100397 / JF-1), this protein is 5-amino-6-(D-ribitylamino)uracil--L-tyrosine 4-hydroxyphenyl transferase.